The sequence spans 353 residues: Uroporphyrinogen decarboxylase (353 aa).

Substrate contacts are provided by residues 29-33, Asp79, Tyr156, Thr211, and His329; that span reads RQAGR.

This sequence belongs to the uroporphyrinogen decarboxylase family. Homodimer.

Its subcellular location is the cytoplasm. It carries out the reaction uroporphyrinogen III + 4 H(+) = coproporphyrinogen III + 4 CO2. It functions in the pathway porphyrin-containing compound metabolism; protoporphyrin-IX biosynthesis; coproporphyrinogen-III from 5-aminolevulinate: step 4/4. In terms of biological role, catalyzes the decarboxylation of four acetate groups of uroporphyrinogen-III to yield coproporphyrinogen-III. The sequence is that of Uroporphyrinogen decarboxylase from Alcanivorax borkumensis (strain ATCC 700651 / DSM 11573 / NCIMB 13689 / SK2).